A 615-amino-acid polypeptide reads, in one-letter code: Dehydrogenase str4 (615 aa).

FAD-binding positions include 45–46, 66–67, and 123–126; these read TA, EA, and NGSM. Catalysis depends on H552, which acts as the Proton acceptor. FAD-binding positions include A585 and 596 to 597; that span reads PA.

This sequence belongs to the GMC oxidoreductase family. As to quaternary structure, homodimer. FAD is required as a cofactor.

It functions in the pathway mycotoxin biosynthesis. Functionally, dehydrogenase; part of the gene cluster that mediates the biosynthesis of strobilurin A, an antifungal polyketide that contains a key beta-methoxyacrylate toxophore that targets the complex III of the mitochondrial electron transport chain. Strobilurin biosynthesis begins with construction of benzoyl CoA by step-wise elimination of ammonia from phenylalanine by the phenylalanine ammonia-lyase str11, oxygenation by str8 and retro-Claisen reaction to form benzoic acid, which is activated to its CoA thiolester benzoyl CoA by the dedicated CoA ligase str10. Benzoyl CoA forms the starter unit for the highly reducing polyketide synthase stpks1 that produces the polyketide prestrobilutin A. The FAD-dependent oxygenase str9 then catalyzes the key oxidative rearrangement responsible for the creation of the beta-methoxyacrylate toxophore. Str9 performs epoxidation of the 2,3 olefin of prestrobilutin A, followed by Meinwald rearrangement to furnish the aldehyde intermediate. Rapid enolization of the aldehyde intermediate would give the beta-methoxyacrylate skeleton and methylations catalyzed by str2 and str3 complete the synthesis and lead to the production of strobilurin A. The short-chain dehydrogenase stl2 and the dehydrogenase str4 play a role in the shunt pathway leading to the production of bolineol. The cluster encodes no obvious halogenase gene that could be involved in production of strobilurin B, nor any obvious dimethylallyl-transferase that could be involved in the production of strobilurin G. It is possible that unknown proteins encoded in, or near, the cluster (such as str1 or stl1) may form new classes of halogenases or dimethylally-transferases, or that the responsible genes are located elsewhere on the genome. Similarly, proteins encoded by str5/str6 hydrolases appear to have no chemical role in the biosynthesis of strobilurin A. Finally, no obvious self-resistance gene is found within the cluster. This Strobilurus tenacellus protein is Dehydrogenase str4.